The chain runs to 24 residues: Superoxide dismutase [Cu-Zn], chloroplastic (24 aa).

It belongs to the Cu-Zn superoxide dismutase family. As to quaternary structure, homodimer. The cofactor is Cu cation. Requires Zn(2+) as cofactor.

It localises to the plastid. Its subcellular location is the chloroplast. The catalysed reaction is 2 superoxide + 2 H(+) = H2O2 + O2. Destroys radicals which are normally produced within the cells and which are toxic to biological systems. This Picea abies (Norway spruce) protein is Superoxide dismutase [Cu-Zn], chloroplastic.